The chain runs to 214 residues: Orotate phosphoribosyltransferase (214 aa).

5-phospho-alpha-D-ribose 1-diphosphate is bound at residue lysine 26. Residue 34 to 35 (FF) participates in orotate binding. Residues 72-73 (YK), arginine 99, lysine 100, lysine 103, histidine 105, and 124-132 (DDVITAGTA) each bind 5-phospho-alpha-D-ribose 1-diphosphate. Positions 128 and 157 each coordinate orotate.

Belongs to the purine/pyrimidine phosphoribosyltransferase family. PyrE subfamily. As to quaternary structure, homodimer. Mg(2+) serves as cofactor.

It catalyses the reaction orotidine 5'-phosphate + diphosphate = orotate + 5-phospho-alpha-D-ribose 1-diphosphate. The protein operates within pyrimidine metabolism; UMP biosynthesis via de novo pathway; UMP from orotate: step 1/2. Functionally, catalyzes the transfer of a ribosyl phosphate group from 5-phosphoribose 1-diphosphate to orotate, leading to the formation of orotidine monophosphate (OMP). This Pseudomonas fluorescens (strain Pf0-1) protein is Orotate phosphoribosyltransferase.